The primary structure comprises 231 residues: Large ribosomal subunit protein uL1 (231 aa).

Belongs to the universal ribosomal protein uL1 family. In terms of assembly, part of the 50S ribosomal subunit.

Functionally, binds directly to 23S rRNA. The L1 stalk is quite mobile in the ribosome, and is involved in E site tRNA release. Its function is as follows. Protein L1 is also a translational repressor protein, it controls the translation of the L11 operon by binding to its mRNA. The polypeptide is Large ribosomal subunit protein uL1 (Nitrosomonas eutropha (strain DSM 101675 / C91 / Nm57)).